The following is a 126-amino-acid chain: Small ribosomal subunit protein uS12 (126 aa).

Asp89 carries the 3-methylthioaspartic acid modification.

This sequence belongs to the universal ribosomal protein uS12 family. Part of the 30S ribosomal subunit. Contacts proteins S8 and S17. May interact with IF1 in the 30S initiation complex.

Functionally, with S4 and S5 plays an important role in translational accuracy. Interacts with and stabilizes bases of the 16S rRNA that are involved in tRNA selection in the A site and with the mRNA backbone. Located at the interface of the 30S and 50S subunits, it traverses the body of the 30S subunit contacting proteins on the other side and probably holding the rRNA structure together. The combined cluster of proteins S8, S12 and S17 appears to hold together the shoulder and platform of the 30S subunit. This chain is Small ribosomal subunit protein uS12, found in Polynucleobacter necessarius subsp. necessarius (strain STIR1).